The following is a 147-amino-acid chain: Putative toxin MJ0142 (147 aa).

The protein belongs to the UPF0332 family.

Its function is as follows. Putative toxin component of a putative type VII toxin-antitoxin (TA) system. Its cognate antitoxin might be MJ0141. This chain is Putative toxin MJ0142, found in Methanocaldococcus jannaschii (strain ATCC 43067 / DSM 2661 / JAL-1 / JCM 10045 / NBRC 100440) (Methanococcus jannaschii).